The primary structure comprises 213 residues: Large ribosomal subunit protein uL3 (213 aa).

A disordered region spans residues 130 to 161 (KRGNMTHGSKNHRLPGSTGAGTTPGRVYPGKR).

It belongs to the universal ribosomal protein uL3 family. In terms of assembly, part of the 50S ribosomal subunit. Forms a cluster with proteins L14 and L19.

One of the primary rRNA binding proteins, it binds directly near the 3'-end of the 23S rRNA, where it nucleates assembly of the 50S subunit. The sequence is that of Large ribosomal subunit protein uL3 from Picosynechococcus sp. (strain ATCC 27264 / PCC 7002 / PR-6) (Agmenellum quadruplicatum).